A 61-amino-acid chain; its full sequence is Insect toxin LqhIT5 (61 aa).

Positions 1-61 (DGYIRGGDGC…EWKYETNTCG (61 aa)) constitute an LCN-type CS-alpha/beta domain. 4 cysteine pairs are disulfide-bonded: C10-C60, C14-C35, C21-C42, and C25-C44.

Belongs to the long (4 C-C) scorpion toxin superfamily. Sodium channel inhibitor family. Beta subfamily. Expressed by the venom gland.

The protein resides in the secreted. Its function is as follows. Excitatory insect beta-toxins induce a spastic paralysis. They bind voltage-independently at site-4 of sodium channels (Nav) and shift the voltage of activation toward more negative potentials thereby affecting sodium channel activation and promoting spontaneous and repetitive firing. This toxin is active only on insects. It operates by inducing a fast contraction paralysis without depressant activity. It is more similar to the excitatory toxins in its mode of action and the depressant toxins in its primary structure. The protein is Insect toxin LqhIT5 of Leiurus hebraeus (Hebrew deathstalker scorpion).